A 459-amino-acid polypeptide reads, in one-letter code: Glutamate--tRNA ligase 2 (459 aa).

Positions 8-18 match the 'HIGH' region motif; the sequence is PSPTGYLHIGG. The short motif at 237–241 is the 'KMSKS' region element; that stretch reads KLSKR. Lysine 240 is a binding site for ATP.

Belongs to the class-I aminoacyl-tRNA synthetase family. Glutamate--tRNA ligase type 1 subfamily. As to quaternary structure, monomer.

The protein resides in the cytoplasm. It catalyses the reaction tRNA(Glu) + L-glutamate + ATP = L-glutamyl-tRNA(Glu) + AMP + diphosphate. In terms of biological role, catalyzes the attachment of glutamate to tRNA(Glu) in a two-step reaction: glutamate is first activated by ATP to form Glu-AMP and then transferred to the acceptor end of tRNA(Glu). The polypeptide is Glutamate--tRNA ligase 2 (Campylobacter curvus (strain 525.92)).